Reading from the N-terminus, the 668-residue chain is Acetoin catabolism regulatory protein (668 aa).

Positions 341 to 570 (LTGGDAALQL…NVLEYARAVC (230 aa)) constitute a Sigma-54 factor interaction domain. ATP-binding positions include 369–376 (GETGSGKE) and 433–442 (ADGGTLFLDE). Positions 586–606 (GPAPSAALPQPGPAQSPAAAP) are enriched in low complexity. Positions 586-611 (GPAPSAALPQPGPAQSPAAAPFDPHQ) are disordered. The segment at residues 630 to 649 (LSAVARQIGVSRMTLYRRME) is a DNA-binding region (H-T-H motif).

Required for sigma-54-dependent transcription of acoXABC. In Cupriavidus necator (strain ATCC 17699 / DSM 428 / KCTC 22496 / NCIMB 10442 / H16 / Stanier 337) (Ralstonia eutropha), this protein is Acetoin catabolism regulatory protein (acoR).